Here is a 198-residue protein sequence, read N- to C-terminus: MEDQETKRITKKPSRSIIISLKDIPPLDPSSIPSMKPMAQDHHNVGMQRFQEKTDFKFEEEDNAISSFSNIQIDPNSTRSISLEKKLAPKPDEEHTTTTKPISKDDESKTRRGSAKSVLHEMCASKRWRPPVYECCNVDGPCHLRLFTYKVMVEIRDSSGKTVLECFGDPRRKKKAAAEHAAEGALWYLEHVKTKPHQ.

Residues 85–110 (KKLAPKPDEEHTTTTKPISKDDESKT) are compositionally biased toward basic and acidic residues. The disordered stretch occupies residues 85–115 (KKLAPKPDEEHTTTTKPISKDDESKTRRGSA). In terms of domain architecture, DRBM spans 114 to 191 (SAKSVLHEMC…AEGALWYLEH (78 aa)).

The chain is Ribonuclease 3-like protein 1 (RTL1) from Arabidopsis thaliana (Mouse-ear cress).